The following is a 153-amino-acid chain: ATP synthase subunit b' (153 aa).

The chain crosses the membrane as a helical span at residues 23–40; the sequence is LMAIQVVALTYILNSLFF.

Belongs to the ATPase B chain family. In terms of assembly, F-type ATPases have 2 components, F(1) - the catalytic core - and F(0) - the membrane proton channel. F(1) has five subunits: alpha(3), beta(3), gamma(1), delta(1), epsilon(1). F(0) has four main subunits: a(1), b(1), b'(1) and c(10-14). The alpha and beta chains form an alternating ring which encloses part of the gamma chain. F(1) is attached to F(0) by a central stalk formed by the gamma and epsilon chains, while a peripheral stalk is formed by the delta, b and b' chains.

The protein localises to the cellular thylakoid membrane. F(1)F(0) ATP synthase produces ATP from ADP in the presence of a proton or sodium gradient. F-type ATPases consist of two structural domains, F(1) containing the extramembraneous catalytic core and F(0) containing the membrane proton channel, linked together by a central stalk and a peripheral stalk. During catalysis, ATP synthesis in the catalytic domain of F(1) is coupled via a rotary mechanism of the central stalk subunits to proton translocation. Functionally, component of the F(0) channel, it forms part of the peripheral stalk, linking F(1) to F(0). The b'-subunit is a diverged and duplicated form of b found in plants and photosynthetic bacteria. The sequence is that of ATP synthase subunit b' from Prochlorococcus marinus (strain MIT 9215).